The primary structure comprises 420 residues: MAAAAGDVRGAALGARPGLGAAAAAAAAAEARFISSAKGKGLFATRSIRKGEAVFVEKPVVSSQFLWNALYNYRACDHCLRALETAEENAQRLLGRSSLVLPHPEQCSIRKDLHQQCPRCQVTYCSAECRQAALEQYHQVLCLGPSRDDPTHPLNKLQEAWRNMHYPPETSSIMLMARMVATVKQAKDKDWWIKAFSQFCSKTANEEEEIAHKLLGDKFKGQLELLRLLFTEALYDEQLSRWFTPEGFRSLFALVGTNGQGIGTSSLSQWVHACDALDLPMLQREELDAFIDQLYKDIEKESGEFLNCEGSGLYMLQSCCNHSCIPNAETSFPDNNFLLYLTALEDIEAGEEICISYLDCCQRERSRHSRNKILRENYLFTCSCPKCLAQADDPDVTSDEEEEAEGETDDAELEDEMTDV.

Residues 29-358 (AEARFISSAK…AGEEICISYL (330 aa)) enclose the SET domain. The segment at 104–142 (PEQCSIRKDLHQQCPRCQVTYCSAECRQAALEQYHQVLC) adopts an MYND-type zinc-finger fold. Tyr357 serves as a coordination point for S-adenosyl-L-methionine. A disordered region spans residues 392-420 (DDPDVTSDEEEEAEGETDDAELEDEMTDV).

Belongs to the class V-like SAM-binding methyltransferase superfamily.

It localises to the cytoplasm. It catalyses the reaction L-lysyl-[protein] + 3 S-adenosyl-L-methionine = N(6),N(6),N(6)-trimethyl-L-lysyl-[protein] + 3 S-adenosyl-L-homocysteine + 3 H(+). The enzyme catalyses L-lysyl(20)-[histone H4] + 3 S-adenosyl-L-methionine = N(6),N(6),N(6)-trimethyl-L-lysyl(20)-[histone H4] + 3 S-adenosyl-L-homocysteine + 3 H(+). The catalysed reaction is L-lysyl(36)-[histone H3] + 3 S-adenosyl-L-methionine = N(6),N(6),N(6)-trimethyl-L-lysyl(36)-[histone H3] + 3 S-adenosyl-L-homocysteine + 3 H(+). In terms of biological role, protein-lysine N-trimethyltransferase that specifically catalyzes trimethylation of 'Lys-22' of the RPL40/eL40 subunit of the 60S ribosome, thereby promoting translation elongation and protein synthesis. May also act as a histone methyltransferase in the context of histone octamers, but not on nucleosome substrates: trimethylates 'Lys-36' of histone H3 and 'Lys-20' of histone H4 to form H3K36me3 and H4K20me3, respectively. The histone methyltransferase activity, which is independent of its SET domain, is however unsure in vivo. This is Protein-lysine N-trimethyltransferase SMYD5 (SMYD5) from Gallus gallus (Chicken).